The chain runs to 55 residues: Sec-independent protein translocase protein TatA (55 aa).

The chain crosses the membrane as a helical span at residues 1–21 (MGMSFSHLLIVLLIIFVLFGA).

This sequence belongs to the TatA/E family. In terms of assembly, the Tat system comprises two distinct complexes: a TatABC complex, containing multiple copies of TatA, TatB and TatC subunits, and a separate TatA complex, containing only TatA subunits. Substrates initially bind to the TatABC complex, which probably triggers association of the separate TatA complex to form the active translocon.

The protein resides in the cell inner membrane. Its function is as follows. Part of the twin-arginine translocation (Tat) system that transports large folded proteins containing a characteristic twin-arginine motif in their signal peptide across membranes. TatA could form the protein-conducting channel of the Tat system. The sequence is that of Sec-independent protein translocase protein TatA from Rickettsia peacockii (strain Rustic).